Reading from the N-terminus, the 720-residue chain is Hexanoyl-CoA synthase (720 aa).

A helical transmembrane segment spans residues 242–262; it reads VDAVVIYLAIVLAGYVVVSIA. 290-293 serves as a coordination point for CoA; it reads RGKK. ATP is bound by residues 477–479, 499–504, glutamate 585, and arginine 607; these read GEA and EMCGGT. Glycine 615 serves as a coordination point for CoA. Lysine 618 provides a ligand contact to ATP. Position 681 (glutamine 681) interacts with CoA.

It belongs to the ATP-dependent AMP-binding enzyme family. Requires Mg(2+) as cofactor. As to expression, accumulates in glandular trichomes, especially in female flowers. Present at low levels in roots, stems and leaves.

Its subcellular location is the cytoplasm. It is found in the cytosol. It localises to the membrane. The enzyme catalyses hexanoate + ATP + CoA = hexanoyl-CoA + AMP + diphosphate. It functions in the pathway secondary metabolite biosynthesis; terpenoid biosynthesis. Its activity is regulated as follows. Inhibitied by high CoA concentrations. In terms of biological role, involved in the biosynthesis of cannabinoids-related terpenophenolic natural products, which have pharmacological activity. Acyl-activating enzyme that catalyzes the conversion of hexanoic acid to hexanoyl-CoA, precursor of the cannabinoid pathway. Can also activate other fatty acids including heptanoate, octanoate and nonanoate. The polypeptide is Hexanoyl-CoA synthase (Cannabis sativa (Hemp)).